A 113-amino-acid polypeptide reads, in one-letter code: Dolichyl-diphosphooligosaccharide--protein glycosyltransferase subunit dad-1 (113 aa).

At 1–32 (MAAQVVPVLSKLFDDYQKTTSSKLKIIDAYMT) the chain is on the cytoplasmic side. The chain crosses the membrane as a helical span at residues 33–53 (YILFTGIFQFIYCLLVGTFPF). Residues 54–55 (NS) are Lumenal-facing. Residues 56–78 (FLSGFISTVTSFVLASCLRMQVN) form a helical membrane-spanning segment. At 79–92 (QENRSEFTAVSTER) the chain is on the cytoplasmic side. Residues 93–113 (AFADFIFANLILHLVVVNFLG) traverse the membrane as a helical segment.

This sequence belongs to the DAD/OST2 family. Component of the oligosaccharyltransferase (OST) complex.

The protein resides in the endoplasmic reticulum membrane. Its pathway is protein modification; protein glycosylation. Subunit of the oligosaccharyl transferase (OST) complex that catalyzes the initial transfer of a defined glycan (Glc(3)Man(9)GlcNAc(2) in eukaryotes) from the lipid carrier dolichol-pyrophosphate to an asparagine residue within an Asn-X-Ser/Thr consensus motif in nascent polypeptide chains, the first step in protein N-glycosylation. N-glycosylation occurs cotranslationally and the complex associates with the Sec61 complex at the channel-forming translocon complex that mediates protein translocation across the endoplasmic reticulum (ER). All subunits are required for a maximal enzyme activity. Possesses cell death-inhibiting activity. Suppresses some programmed cell death in C.elegans. The chain is Dolichyl-diphosphooligosaccharide--protein glycosyltransferase subunit dad-1 from Caenorhabditis elegans.